A 72-amino-acid chain; its full sequence is DNA-directed RNA polymerase subunit epsilon (72 aa).

The protein belongs to the RNA polymerase subunit epsilon family. In terms of assembly, RNAP is composed of a core of 2 alpha, a beta and a beta' subunit. The core is associated with a delta subunit, and at least one of epsilon or omega. When a sigma factor is associated with the core the holoenzyme is formed, which can initiate transcription.

It carries out the reaction RNA(n) + a ribonucleoside 5'-triphosphate = RNA(n+1) + diphosphate. In terms of biological role, a non-essential component of RNA polymerase (RNAP). In Staphylococcus haemolyticus (strain JCSC1435), this protein is DNA-directed RNA polymerase subunit epsilon.